We begin with the raw amino-acid sequence, 213 residues long: MNATDLKLYLVTHRYDDNEATFLAKIAAACENSVTMVQLREKMLSTRAYFELAQRVKLITDRYQIPLIIDDRVDICLAVDAAGVHIGDDELPVAMTRQLIGPDKVLGVSTKTVETAVAAVAAGADYLGVGAIFPTQTKANAAVTPIATLKAITAQVAVPVVAIGGVKEANLATFKDTGIAGVAIVSEIMQAPDIAHKVQALRTKLKAVLPNDR.

Residues 38–42 and Asp70 each bind 4-amino-2-methyl-5-(diphosphooxymethyl)pyrimidine; that span reads QLREK. Positions 71 and 90 each coordinate Mg(2+). Ser109 contributes to the 4-amino-2-methyl-5-(diphosphooxymethyl)pyrimidine binding site. 135-137 provides a ligand contact to 2-[(2R,5Z)-2-carboxy-4-methylthiazol-5(2H)-ylidene]ethyl phosphate; the sequence is TQT. Residue Lys138 participates in 4-amino-2-methyl-5-(diphosphooxymethyl)pyrimidine binding. Residues Gly165 and 185-186 contribute to the 2-[(2R,5Z)-2-carboxy-4-methylthiazol-5(2H)-ylidene]ethyl phosphate site; that span reads VS.

It belongs to the thiamine-phosphate synthase family. Mg(2+) serves as cofactor.

The catalysed reaction is 2-[(2R,5Z)-2-carboxy-4-methylthiazol-5(2H)-ylidene]ethyl phosphate + 4-amino-2-methyl-5-(diphosphooxymethyl)pyrimidine + 2 H(+) = thiamine phosphate + CO2 + diphosphate. The enzyme catalyses 2-(2-carboxy-4-methylthiazol-5-yl)ethyl phosphate + 4-amino-2-methyl-5-(diphosphooxymethyl)pyrimidine + 2 H(+) = thiamine phosphate + CO2 + diphosphate. It catalyses the reaction 4-methyl-5-(2-phosphooxyethyl)-thiazole + 4-amino-2-methyl-5-(diphosphooxymethyl)pyrimidine + H(+) = thiamine phosphate + diphosphate. Its pathway is cofactor biosynthesis; thiamine diphosphate biosynthesis; thiamine phosphate from 4-amino-2-methyl-5-diphosphomethylpyrimidine and 4-methyl-5-(2-phosphoethyl)-thiazole: step 1/1. Its function is as follows. Condenses 4-methyl-5-(beta-hydroxyethyl)thiazole monophosphate (THZ-P) and 2-methyl-4-amino-5-hydroxymethyl pyrimidine pyrophosphate (HMP-PP) to form thiamine monophosphate (TMP). The protein is Thiamine-phosphate synthase of Lacticaseibacillus paracasei (strain ATCC 334 / BCRC 17002 / CCUG 31169 / CIP 107868 / KCTC 3260 / NRRL B-441) (Lactobacillus paracasei).